A 524-amino-acid polypeptide reads, in one-letter code: Bifunctional purine biosynthesis protein PurH (524 aa).

Positions 1 to 145 constitute an MGS-like domain; it reads MIKQALLSVS…KNHRDVTVIV (145 aa).

The protein belongs to the PurH family.

It catalyses the reaction (6R)-10-formyltetrahydrofolate + 5-amino-1-(5-phospho-beta-D-ribosyl)imidazole-4-carboxamide = 5-formamido-1-(5-phospho-D-ribosyl)imidazole-4-carboxamide + (6S)-5,6,7,8-tetrahydrofolate. The enzyme catalyses IMP + H2O = 5-formamido-1-(5-phospho-D-ribosyl)imidazole-4-carboxamide. Its pathway is purine metabolism; IMP biosynthesis via de novo pathway; 5-formamido-1-(5-phospho-D-ribosyl)imidazole-4-carboxamide from 5-amino-1-(5-phospho-D-ribosyl)imidazole-4-carboxamide (10-formyl THF route): step 1/1. The protein operates within purine metabolism; IMP biosynthesis via de novo pathway; IMP from 5-formamido-1-(5-phospho-D-ribosyl)imidazole-4-carboxamide: step 1/1. The protein is Bifunctional purine biosynthesis protein PurH of Cupriavidus necator (strain ATCC 17699 / DSM 428 / KCTC 22496 / NCIMB 10442 / H16 / Stanier 337) (Ralstonia eutropha).